The sequence spans 305 residues: Calponin-2 (305 aa).

Ser2 carries the post-translational modification N-acetylserine. 2 positions are modified to N6-acetyllysine: Lys8 and Lys25. The Calponin-homology (CH) domain maps to Pro28–Lys132. Residue Ser138 is modified to Phosphoserine. Calponin-like repeat units follow at residues Ile166–Tyr191, Ile206–Tyr231, and Met245–Tyr269.

The protein belongs to the calponin family. Smooth muscle, and tissues containing significant amounts of smooth muscle.

Thin filament-associated protein that is implicated in the regulation and modulation of smooth muscle contraction. It is capable of binding to actin, calmodulin and tropomyosin. The interaction of calponin with actin inhibits the actomyosin Mg-ATPase activity. In Mus musculus (Mouse), this protein is Calponin-2 (Cnn2).